Consider the following 254-residue polypeptide: MANLSYWLLALFVATWTDVGLCKKRPKPGGWNTGGSRYPGQGSPGGNRYPPQGGGTWGQPHGGGWGQPHGGGWGQPHGGGWGQPHGGGWGQGGGTHNQWNKPNKPKTSMKHMAGAAAAGAVVGGLGGYMLGSAMSRPMLHFGNDWEDRYYRENMNRYPNQVYYRPVDQYNNQNNFVHDCVNITIKQHTVTTTTKGENFTETDVKMMERVVEQMCVTQYQKESQAYYDGRRSSAVLFSSPPVILLISFLIFLIVG.

An N-terminal signal peptide occupies residues 1 to 22 (MANLSYWLLALFVATWTDVGLC). The interval 23–231 (KKRPKPGGWN…SQAYYDGRRS (209 aa)) is interaction with GRB2, ERI3 and SYN1. Positions 25 to 108 (RPKPGGWNTG…WNKPNKPKTS (84 aa)) are disordered. Tandem repeats lie at residues 51–59 (PQGGGTWGQ), 60–67 (PHGGGWGQ), 68–75 (PHGGGWGQ), 76–83 (PHGGGWGQ), and 84–91 (PHGGGWGQ). The 5 X 8 AA tandem repeats of P-H-G-G-G-W-G-Q stretch occupies residues 51 to 91 (PQGGGTWGQPHGGGWGQPHGGGWGQPHGGGWGQPHGGGWGQ). Gly residues predominate over residues 52–95 (QGGGTWGQPHGGGWGQPHGGGWGQPHGGGWGQPHGGGWGQGGGT). Residues His-61, Gly-62, Gly-63, His-69, Gly-70, Gly-71, His-77, Gly-78, Gly-79, His-85, Gly-86, and Gly-87 each contribute to the Cu(2+) site. The tract at residues 90–231 (GQGGGTHNQW…SQAYYDGRRS (142 aa)) is prP27-30 (protease resistant core). Cys-179 and Cys-214 form a disulfide bridge. Asn-181 and Asn-197 each carry an N-linked (GlcNAc...) asparagine glycan. The GPI-anchor amidated serine moiety is linked to residue Ser-231. The propeptide at 232 to 254 (SAVLFSSPPVILLISFLIFLIVG) is removed in mature form.

This sequence belongs to the prion family. In terms of assembly, monomer and homodimer. Has a tendency to aggregate into amyloid fibrils containing a cross-beta spine, formed by a steric zipper of superposed beta-strands. Soluble oligomers may represent an intermediate stage on the path to fibril formation. Copper binding may promote oligomerization. Interacts with GRB2, APP, ERI3/PRNPIP and SYN1. Mislocalized cytosolically exposed PrP interacts with MGRN1; this interaction alters MGRN1 subcellular location and causes lysosomal enlargement. Interacts with KIAA1191.

The protein localises to the cell membrane. Its subcellular location is the golgi apparatus. Its function is as follows. Its primary physiological function is unclear. Has cytoprotective activity against internal or environmental stresses. May play a role in neuronal development and synaptic plasticity. May be required for neuronal myelin sheath maintenance. May play a role in iron uptake and iron homeostasis. Soluble oligomers are toxic to cultured neuroblastoma cells and induce apoptosis (in vitro). Association with GPC1 (via its heparan sulfate chains) targets PRNP to lipid rafts. Also provides Cu(2+) or Zn(2+) for the ascorbate-mediated GPC1 deaminase degradation of its heparan sulfate side chains. This Nothocricetulus migratorius (Gray dwarf hamster) protein is Major prion protein (PRNP).